The following is an 881-amino-acid chain: Mechanosensitive ion channel protein 5 (881 aa).

2 stretches are compositionally biased toward basic and acidic residues: residues M1–F12 and D48–D59. A disordered region spans residues M1 to E248. The span at E115–V145 shows a compositional bias: polar residues. Over residues E169–V179 the composition is skewed to basic and acidic residues. S231 is modified (phosphoserine). Transmembrane regions (helical) follow at residues L265 to C285, V309 to L329, K349 to D369, V387 to V407, I642 to A662, and V677 to V697. The tract at residues P861–P881 is disordered. The segment covering N864 to P881 has biased composition (polar residues).

The protein belongs to the MscS (TC 1.A.23) family.

It localises to the membrane. Its function is as follows. Mechanosensitive channel that opens in response to stretch forces in the membrane lipid bilayer. This chain is Mechanosensitive ion channel protein 5 (MSL5), found in Arabidopsis thaliana (Mouse-ear cress).